Here is a 787-residue protein sequence, read N- to C-terminus: Disintegrin and metalloproteinase domain-containing protein 32 (787 aa).

The signal sequence occupies residues 1–16 (MFRLWLLLAGLCGLLA). Ser17 carries the post-translational modification Phosphoserine. A propeptide spanning residues 17–174 (SRPGFQNSLL…PMDDNIFISE (158 aa)) is cleaved from the precursor. Residues Asn39 and Asn125 are each glycosylated (N-linked (GlcNAc...) asparagine). The Extracellular portion of the chain corresponds to 175-682 (KSEPAVPDLF…ERASGKTENT (508 aa)). In terms of domain architecture, Peptidase M12B spans 186-383 (LYLEMHIVVD…VGVKCLQNKP (198 aa)). Disulfide bonds link Cys295-Cys378, Cys337-Cys362, Cys339-Cys344, and Cys450-Cys471. Residues 391–479 (KPVCGNGRLE…ECGPDITLIN (89 aa)) enclose the Disintegrin domain. Residues Asn465 and Asn598 are each glycosylated (N-linked (GlcNAc...) asparagine). Residues 622–654 (SAHVCSQQCSGHGVCDSRNKCHCSPGYKPPNCQ) form the EGF-like domain. Intrachain disulfides connect Cys626–Cys636, Cys630–Cys642, and Cys644–Cys653. A helical transmembrane segment spans residues 683-703 (WLLGFLIALPILIVTTAIVLA). Residues 704 to 787 (RKQLKKWFAK…DSTQTQSSSN (84 aa)) lie on the Cytoplasmic side of the membrane. The tract at residues 715–787 (EEFPSSESKS…DSTQTQSSSN (73 aa)) is disordered. Residues 728 to 749 (TQTYASQSSSEGSTQTYASQTR) show a composition bias toward polar residues. Residues 771–787 (TSRSKSQDSTQTQSSSN) show a composition bias toward low complexity.

In terms of tissue distribution, testis specific.

It localises to the membrane. In terms of biological role, may play a role in sperm development and fertilization This is a non-catalytic metalloprotease-like protein. The chain is Disintegrin and metalloproteinase domain-containing protein 32 (ADAM32) from Homo sapiens (Human).